The following is a 215-amino-acid chain: Nucleoredoxin-like protein 1 (215 aa).

One can recognise a Thioredoxin; atypical domain in the interval 1–164; that stretch reads MVDLFLGKVL…GAELIDRNFM (164 aa). Residues 190–215 form a disordered region; sequence DEKKKKKKRDDDDDDDDGGGGGGPWG.

It belongs to the nucleoredoxin family.

Its subcellular location is the cell projection. The protein resides in the cilium. The protein localises to the photoreceptor outer segment. Its function is as follows. Plays an important role in retinal cone photoreceptor survival. May play a role in cone cell viability, slowing down cone degeneration, does not seem to play a role in degenerating rods. The polypeptide is Nucleoredoxin-like protein 1 (nxnl1) (Danio rerio (Zebrafish)).